The following is a 98-amino-acid chain: Defensin-A1 (98 aa).

Residues 1–19 (MQTLSFLLALLFLVAQTPA) form the signal peptide. The propeptide occupies 20–62 (QPTGEGEKGGTIQEPEATEAQDTAAVLMAAGAADGDDSDTKQL). 3 cysteine pairs are disulfide-bonded: Cys-67/Cys-94, Cys-69/Cys-83, and Cys-73/Cys-93. A propeptide spanning residues 97-98 (IK) is cleaved from the precursor.

Belongs to the alpha-defensin family. Highly expressed in intestine, and expressed at lower levels in lung and spleen.

It is found in the secreted. Functionally, has antimicrobial activity. This is Defensin-A1 from Ornithorhynchus anatinus (Duckbill platypus).